The following is a 257-amino-acid chain: tRNA pseudouridine synthase A (257 aa).

Aspartate 43 acts as the Nucleophile in catalysis. Position 94 (tyrosine 94) interacts with substrate.

It belongs to the tRNA pseudouridine synthase TruA family.

The enzyme catalyses uridine(38/39/40) in tRNA = pseudouridine(38/39/40) in tRNA. In terms of biological role, formation of pseudouridine at positions 38, 39 and 40 in the anticodon stem and loop of transfer RNAs. The protein is tRNA pseudouridine synthase A of Pyrobaculum arsenaticum (strain DSM 13514 / JCM 11321 / PZ6).